The primary structure comprises 140 residues: Nucleoside diphosphate kinase (140 aa).

ATP-binding residues include Lys11, Phe59, Arg87, Thr93, Arg104, and Asn114. His117 (pros-phosphohistidine intermediate) is an active-site residue.

The protein belongs to the NDK family. As to quaternary structure, homotetramer. The cofactor is Mg(2+).

The protein resides in the cytoplasm. It catalyses the reaction a 2'-deoxyribonucleoside 5'-diphosphate + ATP = a 2'-deoxyribonucleoside 5'-triphosphate + ADP. The enzyme catalyses a ribonucleoside 5'-diphosphate + ATP = a ribonucleoside 5'-triphosphate + ADP. Major role in the synthesis of nucleoside triphosphates other than ATP. The ATP gamma phosphate is transferred to the NDP beta phosphate via a ping-pong mechanism, using a phosphorylated active-site intermediate. This is Nucleoside diphosphate kinase from Rhodopseudomonas palustris (strain BisB18).